Reading from the N-terminus, the 276-residue chain is Undecaprenyl-diphosphatase 1 (276 aa).

7 helical membrane-spanning segments follow: residues 4 to 24 (ILIC…FLPV), 46 to 63 (TFDV…CWEY), 83 to 103 (FTLN…LFEK), 108 to 128 (VLFS…IILW), 187 to 207 (VATE…TLYE), 217 to 237 (VDSL…AFVC), and 252 to 272 (VFAW…YSGW).

This sequence belongs to the UppP family.

It localises to the cell inner membrane. It catalyses the reaction di-trans,octa-cis-undecaprenyl diphosphate + H2O = di-trans,octa-cis-undecaprenyl phosphate + phosphate + H(+). Its function is as follows. Catalyzes the dephosphorylation of undecaprenyl diphosphate (UPP). Confers resistance to bacitracin. This is Undecaprenyl-diphosphatase 1 from Burkholderia lata (strain ATCC 17760 / DSM 23089 / LMG 22485 / NCIMB 9086 / R18194 / 383).